The chain runs to 127 residues: Chondrosarcoma-associated gene 2/3 protein (127 aa).

Positions 68–127 (MSRKPRASSPLSNNHPPTPKRRGSGRHPLNPGPEALSKFPRQPGREKGPIKEVPGTKGSP) are disordered.

As to expression, weakly expressed in kidney. Expressed in various tumor cell lines including carcinomas, myeloid and lymphoid malignancies, melanomas and prostate cancer. Overexpressed in taxol-resistant breast cancer line MDA 435TR and the doxorubicin-resistant multiple myelanoma lines RPMI-8226/Dox40 and RPMI-8226/MDR10V.

Its function is as follows. Drug-resistance related protein, its expression is associated with the chemotherapy resistant and neoplastic phenotype. May also be linked to the malignant phenotype. The sequence is that of Chondrosarcoma-associated gene 2/3 protein (CSAG2) from Homo sapiens (Human).